The following is a 414-amino-acid chain: Proton/glutamate-aspartate symporter (414 aa).

The Cytoplasmic segment spans residues 1–3; that stretch reads MKK. Residues 4 to 24 traverse the membrane as a helical segment; that stretch reads LIAFQILIALAVGAVIGHFFP. Residues 25-42 lie on the Extracellular side of the membrane; sequence DFGMALRPVGDGFIRLIK. A helical membrane pass occupies residues 43–63; the sequence is MIVVPIVFSTIVIGAAGSGSM. The Cytoplasmic segment spans residues 64–73; the sequence is KKMGSLGIKT. A helical membrane pass occupies residues 74–94; that stretch reads IIWFEVITTLVLGLGLLLANV. The Extracellular segment spans residues 95–144; the sequence is LKPGVGLDLSHLAKKDIHELSGYTDKVVDFKQMILDIIPTNIIDVMARND. The chain crosses the membrane as a helical span at residues 145 to 165; it reads LLAVIFFAILFGVAAAGIGKA. Residues 166–182 are Cytoplasmic-facing; the sequence is SEPVMKFFESTAQIMFK. Residues 183 to 203 form a helical membrane-spanning segment; sequence LTQIVMVTAPIGVLALMAASV. Residues 204 to 219 are Extracellular-facing; it reads GQYGIELLLPMFKLVG. A helical membrane pass occupies residues 220-240; the sequence is TVFLGLFLILFVLFPLVGLIF. Residue Gln241 is a topological domain, cytoplasmic. The helical transmembrane segment at 242-262 threads the bilayer; sequence IKYFEVLKMIWDLFLIAFSTT. Topologically, residues 263 to 300 are extracellular; sequence STETILPQLMDRMEKYGCPKRVVSFVVPSGLSLNCDGS. The chain crosses the membrane as a helical span at residues 301–321; the sequence is SLYLSVSCIFLAQAFQVDMTL. Over 322–324 the chain is Cytoplasmic; sequence SQQ. 2 helical membrane-spanning segments follow: residues 325 to 345 and 346 to 366; these read LLMMLVLVMTSKGIAAVPSGS and LVVLLATANAVGLPAEGVAII. At 367 to 414 the chain is on the cytoplasmic side; the sequence is AGVDRVMDMARTGVNVPGHAIACIVVSKWEKAFRQKEWVSANSQTESI.

This sequence belongs to the dicarboxylate/amino acid:cation symporter (DAACS) (TC 2.A.23) family.

It localises to the cell membrane. With respect to regulation, glutamate uptake is inhibited by beta-hydroxyaspartate and cysteic acid. In terms of biological role, catalyzes the proton-dependent, binding-protein-independent transport of glutamate and aspartate. This Bacillus subtilis (strain 168) protein is Proton/glutamate-aspartate symporter.